A 95-amino-acid chain; its full sequence is Co-chaperonin GroES (95 aa).

This sequence belongs to the GroES chaperonin family. In terms of assembly, heptamer of 7 subunits arranged in a ring. Interacts with the chaperonin GroEL.

It localises to the cytoplasm. Functionally, together with the chaperonin GroEL, plays an essential role in assisting protein folding. The GroEL-GroES system forms a nano-cage that allows encapsulation of the non-native substrate proteins and provides a physical environment optimized to promote and accelerate protein folding. GroES binds to the apical surface of the GroEL ring, thereby capping the opening of the GroEL channel. The polypeptide is Co-chaperonin GroES (Marinobacter nauticus (strain ATCC 700491 / DSM 11845 / VT8) (Marinobacter aquaeolei)).